A 215-amino-acid polypeptide reads, in one-letter code: Large ribosomal subunit protein eL14 (215 aa).

K79 is subject to N6-acetyllysine. An N6-acetyllysine; alternate modification is found at K85. K85 bears the N6-succinyllysine; alternate mark. K124 is covalently cross-linked (Glycyl lysine isopeptide (Lys-Gly) (interchain with G-Cter in SUMO2)). S139 carries the phosphoserine modification. Positions 161–215 (VPAKKITAASKKAPAQKVPAQKATGQKAAPAPKAQKGQKAPAQKAPAPKASGKKA) are disordered. 6 consecutive repeat copies span residues 171-175 (KKAPA), 176-180 (QKVPA), 181-185 (QKATG), 186-190 (QKAAP), 193-195 (KAQ), and 196-198 (KGQ). The segment at 171 to 190 (KKAPAQKVPAQKATGQKAAP) is 4 X 5 AA tandem repeats of Q-K-A-[PAS]-X. The segment at 193-198 (KAQKGQ) is 2 X 3 AA tandem repeats of K-[GA]-Q. N6-succinyllysine is present on K204.

It belongs to the eukaryotic ribosomal protein eL14 family. In terms of assembly, component of the large ribosomal subunit.

It localises to the cytoplasm. Its function is as follows. Component of the large ribosomal subunit. The ribosome is a large ribonucleoprotein complex responsible for the synthesis of proteins in the cell. This Homo sapiens (Human) protein is Large ribosomal subunit protein eL14 (RPL14).